The primary structure comprises 415 residues: Diaminopimelate decarboxylase (415 aa).

K54 carries the N6-(pyridoxal phosphate)lysine modification. Pyridoxal 5'-phosphate-binding positions include G223 and 264 to 267 (EPGR). Residues R267, R303, and Y307 each contribute to the substrate site. Residue C338 is the Proton donor of the active site. Residues E339 and Y374 each contribute to the substrate site. Y374 is a pyridoxal 5'-phosphate binding site.

The protein belongs to the Orn/Lys/Arg decarboxylase class-II family. LysA subfamily. In terms of assembly, homodimer. Requires pyridoxal 5'-phosphate as cofactor.

The catalysed reaction is meso-2,6-diaminopimelate + H(+) = L-lysine + CO2. It functions in the pathway amino-acid biosynthesis; L-lysine biosynthesis via DAP pathway; L-lysine from DL-2,6-diaminopimelate: step 1/1. Its function is as follows. Specifically catalyzes the decarboxylation of meso-diaminopimelate (meso-DAP) to L-lysine. The chain is Diaminopimelate decarboxylase from Buchnera aphidicola subsp. Schizaphis graminum (strain Sg).